Reading from the N-terminus, the 213-residue chain is Orotate phosphoribosyltransferase (213 aa).

Lys26 is a 5-phospho-alpha-D-ribose 1-diphosphate binding site. An orotate-binding site is contributed by Phe34–Phe35. 5-phospho-alpha-D-ribose 1-diphosphate-binding positions include Tyr72 to Lys73, Arg99, Lys100, Lys103, His105, and Asp124 to Ala132. Residues Thr128 and Arg156 each coordinate orotate.

The protein belongs to the purine/pyrimidine phosphoribosyltransferase family. PyrE subfamily. Homodimer. It depends on Mg(2+) as a cofactor.

It catalyses the reaction orotidine 5'-phosphate + diphosphate = orotate + 5-phospho-alpha-D-ribose 1-diphosphate. It participates in pyrimidine metabolism; UMP biosynthesis via de novo pathway; UMP from orotate: step 1/2. Catalyzes the transfer of a ribosyl phosphate group from 5-phosphoribose 1-diphosphate to orotate, leading to the formation of orotidine monophosphate (OMP). The chain is Orotate phosphoribosyltransferase from Edwardsiella ictaluri (strain 93-146).